A 419-amino-acid polypeptide reads, in one-letter code: Testin (419 aa).

One can recognise a PET domain in the interval 92 to 199; it reads MILTNPVAAK…GDVKLPSEMN (108 aa). Disordered regions lie at residues 133 to 164 and 199 to 222; these read EKQPVAGSEGAQYRKKQLAKQLPAHDQDPSKC and NAQGDKVHNPAGDRNTPAAVGSKD. Positions 155 to 164 are enriched in basic and acidic residues; that stretch reads PAHDQDPSKC. 3 LIM zinc-binding domains span residues 232–295, 297–357, and 360–419; these read YSCY…CDSE, PRCA…NHAV, and QGCH…KMMS.

This sequence belongs to the prickle / espinas / testin family. As to quaternary structure, interacts via LIM domain 1 with ZYX. Interacts (via LIM domain 3) with ENAH and VASP. Interacts with ALKBH4, talin, actin, alpha-actinin, GRIP1 and PXN. Interacts (via LIM domain 2) with ACTL7A (via N-terminus). Heterodimer with ACTL7A; the heterodimer interacts with ENAH to form a heterotrimer.

It is found in the cytoplasm. The protein resides in the cell junction. Its subcellular location is the focal adhesion. Scaffold protein that may play a role in cell adhesion, cell spreading and in the reorganization of the actin cytoskeleton. Plays a role in the regulation of cell proliferation. May act as a tumor suppressor. This chain is Testin (Tes), found in Rattus norvegicus (Rat).